The chain runs to 299 residues: tRNA uridine(34) hydroxylase (299 aa).

Residues 132 to 226 (AGRPVVMLDT…YFEEVGGAHY (95 aa)) enclose the Rhodanese domain. Cysteine 186 serves as the catalytic Cysteine persulfide intermediate.

It belongs to the TrhO family.

The enzyme catalyses uridine(34) in tRNA + AH2 + O2 = 5-hydroxyuridine(34) in tRNA + A + H2O. In terms of biological role, catalyzes oxygen-dependent 5-hydroxyuridine (ho5U) modification at position 34 in tRNAs. This Burkholderia mallei (strain NCTC 10247) protein is tRNA uridine(34) hydroxylase.